A 166-amino-acid polypeptide reads, in one-letter code: Lactose-binding lectin l-2 (166 aa).

Residues 1-24 (MVSFKLPAFLCVAVLSSMALVSHG) form the signal peptide. 3 disulfide bridges follow: Cys34–Cys45, Cys62–Cys160, and Cys136–Cys152. Residues 41 to 161 (HKNRCYLHVA…CDLLFPSICV (121 aa)) enclose the C-type lectin domain.

As to quaternary structure, homodimer; disulfide-linked. Skin; contained within club cells which are a component of the epidermis in combination with epithelial cells and mucus cells (at protein level).

The protein localises to the secreted. In terms of biological role, involved in host defense at the body surface. Causes agglutination and suppresses the growth of the Gram-negative bacterium E.coli K12. Possesses calcium-independent hemagglutinating activity. The polypeptide is Lactose-binding lectin l-2 (Anguilla japonica (Japanese eel)).